The chain runs to 71 residues: Disintegrin tzabcanin (71 aa).

The Disintegrin domain occupies 1–71 (GEECDCGSPA…ADCPRNHFHA (71 aa)). 6 disulfides stabilise this stretch: cysteine 4–cysteine 19, cysteine 6–cysteine 14, cysteine 13–cysteine 36, cysteine 27–cysteine 33, cysteine 32–cysteine 57, and cysteine 45–cysteine 64. The Cell attachment site motif lies at 49-51 (RGD).

Belongs to the venom metalloproteinase (M12B) family. P-II subfamily. P-IIa sub-subfamily. Expressed by the venom gland.

It localises to the secreted. Functionally, inhibits fibrinogen interaction with platelets. Acts by binding to alpha-IIb/beta-3 (ITGA2B/ITGB3) on the platelet surface and inhibits aggregation induced by ADP, thrombin, platelet-activating factor and collagen. Inhibits cell adhesion to vitronectin, probably by blocking its receptor integrin alpha-V/beta-3 (ITGAV/ITGB3), and to fibronectin in vitro. Shows little to no cytotoxicity in vitro. This chain is Disintegrin tzabcanin, found in Crotalus tzabcan (Yucatan neotropical rattlesnake).